A 180-amino-acid chain; its full sequence is Large ribosomal subunit protein uL5 (180 aa).

Belongs to the universal ribosomal protein uL5 family. Part of the 50S ribosomal subunit; part of the 5S rRNA/L5/L18/L25 subcomplex. Contacts the 5S rRNA and the P site tRNA. Forms a bridge to the 30S subunit in the 70S ribosome.

This is one of the proteins that bind and probably mediate the attachment of the 5S RNA into the large ribosomal subunit, where it forms part of the central protuberance. In the 70S ribosome it contacts protein S13 of the 30S subunit (bridge B1b), connecting the 2 subunits; this bridge is implicated in subunit movement. Contacts the P site tRNA; the 5S rRNA and some of its associated proteins might help stabilize positioning of ribosome-bound tRNAs. The sequence is that of Large ribosomal subunit protein uL5 from Leuconostoc citreum (strain KM20).